A 160-amino-acid polypeptide reads, in one-letter code: Transcriptional repressor NrdR (160 aa).

The span at 1 to 11 (MRCPSCNSLDT) shows a compositional bias: polar residues. A disordered region spans residues 1–20 (MRCPSCNSLDTQVKDSRPTE). A zinc finger lies at 3 to 34 (CPSCNSLDTQVKDSRPTEDSAVIRRRRVCMAC). The ATP-cone domain maps to 49–139 (LTVIKRNGRR…VYRNFREAKD (91 aa)).

The protein belongs to the NrdR family. Zn(2+) is required as a cofactor.

In terms of biological role, negatively regulates transcription of bacterial ribonucleotide reductase nrd genes and operons by binding to NrdR-boxes. The chain is Transcriptional repressor NrdR from Nitrobacter hamburgensis (strain DSM 10229 / NCIMB 13809 / X14).